The following is a 146-amino-acid chain: MKLHELKPAEGSRKVRNRVGRGTSSGNGKTSGRGQKGQKARSGVGLRPGFEGGQTPLFRRLPKRGFTNINAKEYTLVNLDQLNVFEDGTEVTPVVLKEAGIIRAEKSGVKVLGNGELTKKLTVKAAKFSKSAEAAITAKGGSIEVI.

Over residues 1 to 13 the composition is skewed to basic and acidic residues; that stretch reads MKLHELKPAEGSR. Residues 1 to 57 are disordered; it reads MKLHELKPAEGSRKVRNRVGRGTSSGNGKTSGRGQKGQKARSGVGLRPGFEGGQTPL. Residues 23 to 35 are compositionally biased toward gly residues; sequence TSSGNGKTSGRGQ.

This sequence belongs to the universal ribosomal protein uL15 family. As to quaternary structure, part of the 50S ribosomal subunit.

In terms of biological role, binds to the 23S rRNA. This chain is Large ribosomal subunit protein uL15, found in Streptococcus thermophilus (strain ATCC BAA-491 / LMD-9).